The following is a 362-amino-acid chain: DNA replication and repair protein RecF (362 aa).

30 to 37 (GDNGAGKT) serves as a coordination point for ATP.

The protein belongs to the RecF family.

It localises to the cytoplasm. Its function is as follows. The RecF protein is involved in DNA metabolism; it is required for DNA replication and normal SOS inducibility. RecF binds preferentially to single-stranded, linear DNA. It also seems to bind ATP. This is DNA replication and repair protein RecF from Xanthomonas oryzae pv. oryzae (strain MAFF 311018).